We begin with the raw amino-acid sequence, 599 residues long: NADH-quinone oxidoreductase subunit C/D (599 aa).

Polar residues predominate over residues 1–15 (MTDLTAQELAQPSWQ). The segment at 1–21 (MTDLTAQELAQPSWQTRDHQD) is disordered. The interval 1-189 (MTDLTAQELA…DPFELTKQKE (189 aa)) is NADH dehydrogenase I subunit C. The segment at 213–599 (DFMFLNLGPN…IDFVMSDVDR (387 aa)) is NADH dehydrogenase I subunit D.

The protein in the N-terminal section; belongs to the complex I 30 kDa subunit family. In the C-terminal section; belongs to the complex I 49 kDa subunit family. NDH-1 is composed of 13 different subunits. Subunits NuoB, CD, E, F, and G constitute the peripheral sector of the complex.

It is found in the cell inner membrane. It carries out the reaction a quinone + NADH + 5 H(+)(in) = a quinol + NAD(+) + 4 H(+)(out). Its function is as follows. NDH-1 shuttles electrons from NADH, via FMN and iron-sulfur (Fe-S) centers, to quinones in the respiratory chain. The immediate electron acceptor for the enzyme in this species is believed to be ubiquinone. Couples the redox reaction to proton translocation (for every two electrons transferred, four hydrogen ions are translocated across the cytoplasmic membrane), and thus conserves the redox energy in a proton gradient. This Erwinia tasmaniensis (strain DSM 17950 / CFBP 7177 / CIP 109463 / NCPPB 4357 / Et1/99) protein is NADH-quinone oxidoreductase subunit C/D.